The sequence spans 343 residues: Ribosomal RNA small subunit methyltransferase C (343 aa).

The protein belongs to the methyltransferase superfamily. RsmC family. In terms of assembly, monomer.

The protein resides in the cytoplasm. It carries out the reaction guanosine(1207) in 16S rRNA + S-adenosyl-L-methionine = N(2)-methylguanosine(1207) in 16S rRNA + S-adenosyl-L-homocysteine + H(+). In terms of biological role, specifically methylates the guanine in position 1207 of 16S rRNA in the 30S particle. This chain is Ribosomal RNA small subunit methyltransferase C, found in Pseudoalteromonas atlantica (strain T6c / ATCC BAA-1087).